We begin with the raw amino-acid sequence, 316 residues long: MDVLLANPRGFCAGVDRAIEIVKRAIETLGAPIYVRHEVVHNRFVVDDLKQRGAIFVEELDEVPDDATVIFSAHGVSQAVRVEAERRGLKVFDATCPLVTKVHFEVARHCRAGRDVVLIGHAGHPEVEGTMGQWSRERGPGQIYLVEDIEQVATLQVRQPENLAYTTQTTLSVDDTMGIIEALRVRYPAMQGPKHDDICYATQNRQDAVRDLARQCDLVLVVGSPNSSNSNRLSELARRDGVESYLIDNASEIDPAWIVGKQHIGLTAGASAPQVLVDGVLARLRELGANGVSELAGEPESMVFALPKELRLRLVS.

Cysteine 12 lines the [4Fe-4S] cluster pocket. (2E)-4-hydroxy-3-methylbut-2-enyl diphosphate-binding residues include histidine 41 and histidine 74. Dimethylallyl diphosphate is bound by residues histidine 41 and histidine 74. Isopentenyl diphosphate is bound by residues histidine 41 and histidine 74. Cysteine 96 contacts [4Fe-4S] cluster. Residue histidine 124 coordinates (2E)-4-hydroxy-3-methylbut-2-enyl diphosphate. Residue histidine 124 coordinates dimethylallyl diphosphate. Histidine 124 is a binding site for isopentenyl diphosphate. The active-site Proton donor is glutamate 126. Threonine 169 contacts (2E)-4-hydroxy-3-methylbut-2-enyl diphosphate. A [4Fe-4S] cluster-binding site is contributed by cysteine 199. 4 residues coordinate (2E)-4-hydroxy-3-methylbut-2-enyl diphosphate: serine 227, serine 228, asparagine 229, and serine 271. Dimethylallyl diphosphate-binding residues include serine 227, serine 228, asparagine 229, and serine 271. Isopentenyl diphosphate-binding residues include serine 227, serine 228, asparagine 229, and serine 271.

The protein belongs to the IspH family. Requires [4Fe-4S] cluster as cofactor.

The enzyme catalyses isopentenyl diphosphate + 2 oxidized [2Fe-2S]-[ferredoxin] + H2O = (2E)-4-hydroxy-3-methylbut-2-enyl diphosphate + 2 reduced [2Fe-2S]-[ferredoxin] + 2 H(+). The catalysed reaction is dimethylallyl diphosphate + 2 oxidized [2Fe-2S]-[ferredoxin] + H2O = (2E)-4-hydroxy-3-methylbut-2-enyl diphosphate + 2 reduced [2Fe-2S]-[ferredoxin] + 2 H(+). The protein operates within isoprenoid biosynthesis; dimethylallyl diphosphate biosynthesis; dimethylallyl diphosphate from (2E)-4-hydroxy-3-methylbutenyl diphosphate: step 1/1. It functions in the pathway isoprenoid biosynthesis; isopentenyl diphosphate biosynthesis via DXP pathway; isopentenyl diphosphate from 1-deoxy-D-xylulose 5-phosphate: step 6/6. In terms of biological role, catalyzes the conversion of 1-hydroxy-2-methyl-2-(E)-butenyl 4-diphosphate (HMBPP) into a mixture of isopentenyl diphosphate (IPP) and dimethylallyl diphosphate (DMAPP). Acts in the terminal step of the DOXP/MEP pathway for isoprenoid precursor biosynthesis. In Xanthomonas campestris pv. campestris (strain 8004), this protein is 4-hydroxy-3-methylbut-2-enyl diphosphate reductase.